The following is a 257-amino-acid chain: MDAEYSGNEFPRSEGERDQHQRPGKERKSGEAGWGTGELGQDGRLLSSTLSLSSNRSLGQRQNSPLPFQWRITHSFRWMAQVLASELSLVAFILLLVVAFSKKWLDLSRSLFYQRWPVDVSNRIHTSAHVMSMGLLHFYKSRSCSDLENGKVTFIFSTLMLFPINIWIFELERNVSIPIGWSYFIGWLVLILYFTCAILCYFNHKSFWSLILSHPSGAVSCSSSFGSVEESPRAQTITDTPITQEGVLDPEQKDTHV.

The segment at 1–41 (MDAEYSGNEFPRSEGERDQHQRPGKERKSGEAGWGTGELGQ) is disordered. The segment covering 11–30 (PRSEGERDQHQRPGKERKSG) has biased composition (basic and acidic residues). Position 64 is a phosphoserine (Ser-64). Helical transmembrane passes span 80–100 (AQVL…VVAF), 152–172 (VTFI…FELE), and 179–199 (IGWS…CAIL).

In terms of tissue distribution, expressed in testis and sperm; especially localized to sperm tail (at protein level).

The protein localises to the membrane. In terms of biological role, component of the outer dense fibers (ODF) of spermatozoa which could be involved in sperm tail structure, sperm movement and general organization of cellular cytoskeleton. The polypeptide is Outer dense fiber protein 4 (ODF4) (Homo sapiens (Human)).